Here is a 1479-residue protein sequence, read N- to C-terminus: Chromosome partition protein MukB (1479 aa).

34 to 41 contacts ATP; sequence GGNGAGKS. 5 coiled-coil regions span residues 337–418, 511–603, 780–810, 847–1116, and 1206–1265; these read LNLV…QYQQ, QAER…RAPV, RAAREMRLESLRDEREALAEQYATLSFDVQK, ELDR…AKAG, and DDPV…LQAV. The interval 666-783 is flexible hinge; sequence PGGSEDPRLN…EVPLFGRAAR (118 aa).

It belongs to the SMC family. MukB subfamily. In terms of assembly, homodimerization via its hinge domain. Binds to DNA via its C-terminal region. Interacts, and probably forms a ternary complex, with MukE and MukF via its C-terminal region. The complex formation is stimulated by calcium or magnesium. Interacts with tubulin-related protein FtsZ.

Its subcellular location is the cytoplasm. It localises to the nucleoid. In terms of biological role, plays a central role in chromosome condensation, segregation and cell cycle progression. Functions as a homodimer, which is essential for chromosome partition. Involved in negative DNA supercoiling in vivo, and by this means organize and compact chromosomes. May achieve or facilitate chromosome segregation by condensation DNA from both sides of a centrally located replisome during cell division. This is Chromosome partition protein MukB from Pectobacterium carotovorum subsp. carotovorum (strain PC1).